A 349-amino-acid chain; its full sequence is tRNA N6-adenosine threonylcarbamoyltransferase (349 aa).

Residues His-117 and His-121 each coordinate Fe cation. Residues Leu-140–Gly-144, Asp-173, Gly-186, and Asn-284 each bind substrate. Fe cation is bound at residue Asp-312.

It belongs to the KAE1 / TsaD family. It depends on Fe(2+) as a cofactor.

The protein localises to the cytoplasm. The catalysed reaction is L-threonylcarbamoyladenylate + adenosine(37) in tRNA = N(6)-L-threonylcarbamoyladenosine(37) in tRNA + AMP + H(+). In terms of biological role, required for the formation of a threonylcarbamoyl group on adenosine at position 37 (t(6)A37) in tRNAs that read codons beginning with adenine. Is involved in the transfer of the threonylcarbamoyl moiety of threonylcarbamoyl-AMP (TC-AMP) to the N6 group of A37, together with TsaE and TsaB. TsaD likely plays a direct catalytic role in this reaction. The polypeptide is tRNA N6-adenosine threonylcarbamoyltransferase (Psychrobacter arcticus (strain DSM 17307 / VKM B-2377 / 273-4)).